Reading from the N-terminus, the 513-residue chain is GMP synthase [glutamine-hydrolyzing] (513 aa).

The Glutamine amidotransferase type-1 domain maps to 5-195 (LVLVIDFGGQ…VYNICGCTGD (191 aa)). C82 acts as the Nucleophile in catalysis. Active-site residues include H169 and E171. Positions 196–388 (WKMDSFVEKT…LGIPEKLVFR (193 aa)) constitute a GMPS ATP-PPase domain. 223-229 (SGGVDSS) contacts ATP.

As to quaternary structure, homodimer.

The catalysed reaction is XMP + L-glutamine + ATP + H2O = GMP + L-glutamate + AMP + diphosphate + 2 H(+). It participates in purine metabolism; GMP biosynthesis; GMP from XMP (L-Gln route): step 1/1. Functionally, catalyzes the synthesis of GMP from XMP. The polypeptide is GMP synthase [glutamine-hydrolyzing] (Clostridium botulinum (strain Eklund 17B / Type B)).